The following is a 1447-amino-acid chain: Gag-Pol polyprotein (1447 aa).

Gly2 carries the N-myristoyl glycine; by host lipid modification. The interval 7 to 31 is interaction with Gp41; sequence VLSGGELDRWEKIRLRPGGKKKYKL. Residues 8 to 43 form an interaction with host CALM1 region; that stretch reads LSGGELDRWEKIRLRPGGKKKYKLKHIVWASRELER. Residues 12 to 19 are interaction with host AP3D1; that stretch reads ELDRWEKI. The interval 14-33 is interaction with membrane phosphatidylinositol 4,5-bisphosphate and RNA; that stretch reads DRWEKIRLRPGGKKKYKLKH. The short motif at 16-22 is the Nuclear export signal element; it reads WEKIRLR. A Nuclear localization signal motif is present at residues 26–32; sequence KKKYKLK. Residues 73–77 form an interaction with membrane phosphatidylinositol 4,5-bisphosphate region; that stretch reads EELRS. The tract at residues 106–128 is disordered; it reads EEQNKSKKKAQQAAADTGHSSQV. Tyr132 is subject to Phosphotyrosine; by host. The tract at residues 189 to 227 is interaction with human PPIA/CYPA and NUP153; that stretch reads NTVGGHQAAMQMLKETINEEAAEWDRVHPVHAGPIAPGQ. Positions 277–363 are dimerization/Multimerization of capsid protein p24; it reads YSPTSILDIR…GGPGHKARVL (87 aa). CCHC-type zinc fingers lie at residues 390 to 407 and 411 to 428; these read VKCFNCGKEGHIARNCRA and KGCWKCGKEGHQMKDCTE. Residues 447–476 form a disordered region; it reads EFSSEQTRANSPTISSEQTRANSPTRRELQ. The segment covering 450–470 has biased composition (polar residues); that stretch reads SEQTRANSPTISSEQTRANSP. The tract at residues 501–505 is dimerization of protease; it reads PQITL. A Peptidase A2 domain is found at 520–589; the sequence is KEALLDTGAD…TPVNIIGRNL (70 aa). The active-site For protease activity; shared with dimeric partner is Asp525. 2 dimerization of protease regions span residues 549–555 and 588–600; these read GIGGFIK and NLLTQIGCTLNFP. The Reverse transcriptase domain occupies 643-833; the sequence is EGKISKIGPE…PPFLWMGYEL (191 aa). Mg(2+) contacts are provided by Asp709, Asp784, and Asp785. Residues 826–834 are RT 'primer grip'; that stretch reads FLWMGYELH. The Tryptophan repeat motif motif lies at 997–1013; the sequence is WETWWTEYWQATWIPEW. Residues 1033–1156 enclose the RNase H type-1 domain; the sequence is IVGAETFYVD…VDKLVSAGIR (124 aa). Mg(2+) is bound by residues Asp1042, Glu1077, Asp1097, and Asp1148. The Integrase-type zinc-finger motif lies at 1162 to 1203; that stretch reads DGIDKAQDEHEKYHSNWRAMASDFNLPPVVAKEIVASCDKCQ. Positions 1171, 1175, 1199, and 1202 each coordinate Zn(2+). An Integrase catalytic domain is found at 1213 to 1363; it reads VDCSPGIWQL…SAGERIVDII (151 aa). 3 residues coordinate Mg(2+): Asp1223, Asp1275, and Glu1311. The segment at residues 1382-1429 is a DNA-binding region (integrase-type); the sequence is FRVYYRDSRDPLWKGPAKLLWKGEGAVVIQDNSDIKVVPRRKAKIIRD.

In terms of assembly, homotrimer; further assembles as hexamers of trimers. Interacts with gp41 (via C-terminus). Interacts with host CALM1; this interaction induces a conformational change in the Matrix protein, triggering exposure of the myristate group. Interacts with host AP3D1; this interaction allows the polyprotein trafficking to multivesicular bodies during virus assembly. Part of the pre-integration complex (PIC) which is composed of viral genome, matrix protein, Vpr and integrase. Homodimer; the homodimer further multimerizes as homohexamers or homopentamers. Interacts with human PPIA/CYPA; This interaction stabilizes the capsid. Interacts with human NUP153. Interacts with host PDZD8; this interaction stabilizes the capsid. Interacts with monkey TRIM5; this interaction destabilizes the capsid. As to quaternary structure, homodimer, whose active site consists of two apposed aspartic acid residues. In terms of assembly, heterodimer of p66 RT and p51 RT (RT p66/p51). Heterodimerization of RT is essential for DNA polymerase activity. The overall folding of the subdomains is similar in p66 RT and p51 RT but the spatial arrangements of the subdomains are dramatically different. Homotetramer; may further associate as a homohexadecamer. Part of the pre-integration complex (PIC) which is composed of viral genome, matrix protein, Vpr and integrase. Interacts with human SMARCB1/INI1 and human PSIP1/LEDGF isoform 1. Interacts with human KPNA3; this interaction might play a role in nuclear import of the pre-integration complex. Interacts with human NUP153; this interaction might play a role in nuclear import of the pre-integration complex. Mg(2+) is required as a cofactor. Post-translationally, specific enzymatic cleavages by the viral protease yield mature proteins. The protease is released by autocatalytic cleavage. The polyprotein is cleaved during and after budding, this process is termed maturation. Proteolytic cleavage of p66 RT removes the RNase H domain to yield the p51 RT subunit. Nucleocapsid protein p7 might be further cleaved after virus entry. In terms of processing, tyrosine phosphorylated presumably in the virion by a host kinase. Phosphorylation is apparently not a major regulator of membrane association. Phosphorylated possibly by host MAPK1; this phosphorylation is necessary for Pin1-mediated virion uncoating. Post-translationally, methylated by host PRMT6, impairing its function by reducing RNA annealing and the initiation of reverse transcription.

The protein localises to the host cell membrane. The protein resides in the host endosome. It is found in the host multivesicular body. It localises to the virion membrane. Its subcellular location is the host nucleus. The protein localises to the host cytoplasm. The protein resides in the virion. The enzyme catalyses Specific for a P1 residue that is hydrophobic, and P1' variable, but often Pro.. It carries out the reaction Endohydrolysis of RNA in RNA/DNA hybrids. Three different cleavage modes: 1. sequence-specific internal cleavage of RNA. Human immunodeficiency virus type 1 and Moloney murine leukemia virus enzymes prefer to cleave the RNA strand one nucleotide away from the RNA-DNA junction. 2. RNA 5'-end directed cleavage 13-19 nucleotides from the RNA end. 3. DNA 3'-end directed cleavage 15-20 nucleotides away from the primer terminus.. It catalyses the reaction 3'-end directed exonucleolytic cleavage of viral RNA-DNA hybrid.. The catalysed reaction is DNA(n) + a 2'-deoxyribonucleoside 5'-triphosphate = DNA(n+1) + diphosphate. With respect to regulation, the viral protease is inhibited by many synthetic protease inhibitors (PIs), such as amprenavir, atazanavir, indinavir, loprinavir, nelfinavir, ritonavir and saquinavir. RT can be inhibited either by nucleoside RT inhibitors (NRTIs) or by non nucleoside RT inhibitors (NNRTIs). NRTIs act as chain terminators, whereas NNRTIs inhibit DNA polymerization by binding a small hydrophobic pocket near the RT active site and inducing an allosteric change in this region. Classical NRTIs are abacavir, adefovir (PMEA), didanosine (ddI), lamivudine (3TC), stavudine (d4T), tenofovir (PMPA), zalcitabine (ddC), and zidovudine (AZT). Classical NNRTIs are atevirdine (BHAP U-87201E), delavirdine, efavirenz (DMP-266), emivirine (I-EBU), and nevirapine (BI-RG-587). The tritherapies used as a basic effective treatment of AIDS associate two NRTIs and one NNRTI. Use of protease inhibitors in tritherapy regimens permit more ambitious therapeutic strategies. Its function is as follows. Gag-Pol polyprotein and Gag polyprotein may regulate their own translation, by the binding genomic RNA in the 5'-UTR. At low concentration, Gag-Pol and Gag would promote translation, whereas at high concentration, the polyproteins encapsidate genomic RNA and then shut off translation. Matrix protein p17 targets Gag and Gag-pol polyproteins to the plasma membrane via a multipartite membrane-binding signal, that includes its myristoylated N-terminus. Matrix protein is part of the pre-integration complex. Implicated in the release from host cell mediated by Vpu. Binds to RNA. In terms of biological role, forms the conical core that encapsulates the genomic RNA-nucleocapsid complex in the virion. Most core are conical, with only 7% tubular. The core is constituted by capsid protein hexamer subunits. The core is disassembled soon after virion entry. Host restriction factors such as TRIM5-alpha or TRIMCyp bind retroviral capsids and cause premature capsid disassembly, leading to blocks in reverse transcription. Capsid restriction by TRIM5 is one of the factors which restricts HIV-1 to the human species. Host PIN1 apparently facilitates the virion uncoating. On the other hand, interactions with PDZD8 or CYPA stabilize the capsid. Functionally, nucleocapsid protein p7 encapsulates and protects viral dimeric unspliced genomic RNA (gRNA). Binds these RNAs through its zinc fingers. Acts as a nucleic acid chaperone which is involved in rearangement of nucleic acid secondary structure during gRNA retrotranscription. Also facilitates template switch leading to recombination. As part of the polyprotein, participates in gRNA dimerization, packaging, tRNA incorporation and virion assembly. Its function is as follows. The aspartyl protease mediates proteolytic cleavages of Gag and Gag-Pol polyproteins during or shortly after the release of the virion from the plasma membrane. Cleavages take place as an ordered, step-wise cascade to yield mature proteins. This process is called maturation. Displays maximal activity during the budding process just prior to particle release from the cell. Also cleaves Nef and Vif, probably concomitantly with viral structural proteins on maturation of virus particles. Hydrolyzes host EIF4GI and PABP1 in order to shut off the capped cellular mRNA translation. The resulting inhibition of cellular protein synthesis serves to ensure maximal viral gene expression and to evade host immune response. Also mediates cleavage of host YTHDF3. Mediates cleavage of host CARD8, thereby activating the CARD8 inflammasome, leading to the clearance of latent HIV-1 in patient CD4(+) T-cells after viral reactivation; in contrast, HIV-1 can evade CARD8-sensing when its protease remains inactive in infected cells prior to viral budding. Reverse transcriptase/ribonuclease H (RT) is a multifunctional enzyme that converts the viral RNA genome into dsDNA in the cytoplasm, shortly after virus entry into the cell. This enzyme displays a DNA polymerase activity that can copy either DNA or RNA templates, and a ribonuclease H (RNase H) activity that cleaves the RNA strand of RNA-DNA heteroduplexes in a partially processive 3' to 5' endonucleasic mode. Conversion of viral genomic RNA into dsDNA requires many steps. A tRNA(3)-Lys binds to the primer-binding site (PBS) situated at the 5'-end of the viral RNA. RT uses the 3' end of the tRNA primer to perform a short round of RNA-dependent minus-strand DNA synthesis. The reading proceeds through the U5 region and ends after the repeated (R) region which is present at both ends of viral RNA. The portion of the RNA-DNA heteroduplex is digested by the RNase H, resulting in a ssDNA product attached to the tRNA primer. This ssDNA/tRNA hybridizes with the identical R region situated at the 3' end of viral RNA. This template exchange, known as minus-strand DNA strong stop transfer, can be either intra- or intermolecular. RT uses the 3' end of this newly synthesized short ssDNA to perform the RNA-dependent minus-strand DNA synthesis of the whole template. RNase H digests the RNA template except for two polypurine tracts (PPTs) situated at the 5'-end and near the center of the genome. It is not clear if both polymerase and RNase H activities are simultaneous. RNase H probably can proceed both in a polymerase-dependent (RNA cut into small fragments by the same RT performing DNA synthesis) and a polymerase-independent mode (cleavage of remaining RNA fragments by free RTs). Secondly, RT performs DNA-directed plus-strand DNA synthesis using the PPTs that have not been removed by RNase H as primers. PPTs and tRNA primers are then removed by RNase H. The 3' and 5' ssDNA PBS regions hybridize to form a circular dsDNA intermediate. Strand displacement synthesis by RT to the PBS and PPT ends produces a blunt ended, linear dsDNA copy of the viral genome that includes long terminal repeats (LTRs) at both ends. In terms of biological role, catalyzes viral DNA integration into the host chromosome, by performing a series of DNA cutting and joining reactions. This enzyme activity takes place after virion entry into a cell and reverse transcription of the RNA genome in dsDNA. The first step in the integration process is 3' processing. This step requires a complex comprising the viral genome, matrix protein, Vpr and integrase. This complex is called the pre-integration complex (PIC). The integrase protein removes 2 nucleotides from each 3' end of the viral DNA, leaving recessed CA OH's at the 3' ends. In the second step, the PIC enters cell nucleus. This process is mediated through integrase and Vpr proteins, and allows the virus to infect a non dividing cell. This ability to enter the nucleus is specific of lentiviruses, other retroviruses cannot and rely on cell division to access cell chromosomes. In the third step, termed strand transfer, the integrase protein joins the previously processed 3' ends to the 5' ends of strands of target cellular DNA at the site of integration. The 5'-ends are produced by integrase-catalyzed staggered cuts, 5 bp apart. A Y-shaped, gapped, recombination intermediate results, with the 5'-ends of the viral DNA strands and the 3' ends of target DNA strands remaining unjoined, flanking a gap of 5 bp. The last step is viral DNA integration into host chromosome. This involves host DNA repair synthesis in which the 5 bp gaps between the unjoined strands are filled in and then ligated. Since this process occurs at both cuts flanking the HIV genome, a 5 bp duplication of host DNA is produced at the ends of HIV-1 integration. Alternatively, Integrase may catalyze the excision of viral DNA just after strand transfer, this is termed disintegration. In Homo sapiens (Human), this protein is Gag-Pol polyprotein (gag-pol).